A 227-amino-acid polypeptide reads, in one-letter code: Adapter protein MecA 1 (227 aa).

The protein belongs to the MecA family. In terms of assembly, homodimer.

In terms of biological role, enables the recognition and targeting of unfolded and aggregated proteins to the ClpC protease or to other proteins involved in proteolysis. Acts negatively in the development of competence by binding ComK and recruiting it to the ClpCP protease. When overexpressed, inhibits sporulation. Also involved in Spx degradation by ClpC. The chain is Adapter protein MecA 1 (mecA1) from Bacillus cereus (strain ATCC 14579 / DSM 31 / CCUG 7414 / JCM 2152 / NBRC 15305 / NCIMB 9373 / NCTC 2599 / NRRL B-3711).